A 155-amino-acid chain; its full sequence is 2-C-methyl-D-erythritol 2,4-cyclodiphosphate synthase (155 aa).

A divalent metal cation is bound by residues D8 and H10. Residues 8-10 (DVH) and 34-35 (HS) contribute to the 4-CDP-2-C-methyl-D-erythritol 2-phosphate site. An a divalent metal cation-binding site is contributed by H42. 4-CDP-2-C-methyl-D-erythritol 2-phosphate-binding positions include 56-58 (DIG), 61-65 (FPDSD), 100-106 (AQKPKML), 132-135 (TTEE), F139, and K142.

This sequence belongs to the IspF family. Homotrimer. The cofactor is a divalent metal cation.

The enzyme catalyses 4-CDP-2-C-methyl-D-erythritol 2-phosphate = 2-C-methyl-D-erythritol 2,4-cyclic diphosphate + CMP. It participates in isoprenoid biosynthesis; isopentenyl diphosphate biosynthesis via DXP pathway; isopentenyl diphosphate from 1-deoxy-D-xylulose 5-phosphate: step 4/6. Involved in the biosynthesis of isopentenyl diphosphate (IPP) and dimethylallyl diphosphate (DMAPP), two major building blocks of isoprenoid compounds. Catalyzes the conversion of 4-diphosphocytidyl-2-C-methyl-D-erythritol 2-phosphate (CDP-ME2P) to 2-C-methyl-D-erythritol 2,4-cyclodiphosphate (ME-CPP) with a corresponding release of cytidine 5-monophosphate (CMP). This chain is 2-C-methyl-D-erythritol 2,4-cyclodiphosphate synthase, found in Clostridium botulinum (strain 657 / Type Ba4).